Here is a 148-residue protein sequence, read N- to C-terminus: Meiosis inducing protein mei3 (148 aa).

A compositionally biased stretch (polar residues) spans Met-1–Pro-20. Residues Met-1–Glu-96 form a disordered region. A compositionally biased stretch (low complexity) spans Asn-21 to Lys-46. Basic residues predominate over residues Pro-75 to Pro-86.

In terms of biological role, acts as a critical meiotic inducer by binding non-covalently to protein kinase ran1/pat1 inhibiting its enzymatic activity. Inhibits ran1/pat1 by acting as a pseudosubstrate for ran1/pat1 instead of its natural substrate ste11. Inactivation of the ran1/pat1 protein kinase is both necessary and sufficient to divert a vegetative cell from mitotic division to meiotic differentiation. The protein is Meiosis inducing protein mei3 of Schizosaccharomyces pombe (strain 972 / ATCC 24843) (Fission yeast).